The sequence spans 98 residues: MSSDPRDVLLAPVISEKSYGLLDQNKYTFLVPPESNKTQIKIAVEKVFNVRVLDVNTINRQGKRKRTRRGWGQRKNTKRAIVTVAPGDRIDIFGPPVS.

The protein belongs to the universal ribosomal protein uL23 family. Part of the 50S ribosomal subunit. Contacts protein L29, and trigger factor when it is bound to the ribosome.

Its function is as follows. One of the early assembly proteins it binds 23S rRNA. One of the proteins that surrounds the polypeptide exit tunnel on the outside of the ribosome. Forms the main docking site for trigger factor binding to the ribosome. The polypeptide is Large ribosomal subunit protein uL23 (Acidothermus cellulolyticus (strain ATCC 43068 / DSM 8971 / 11B)).